Here is a 1331-residue protein sequence, read N- to C-terminus: X-linked retinitis pigmentosa GTPase regulator-interacting protein 1 (1331 aa).

3 disordered regions span residues 1-165 (MQHL…PPAF), 183-220 (SQLTHTMTTDSTHVEEIPRSPEKTSKVEKPEQRSSEEC), and 351-374 (HQPLDSSHQPHWSTELTGKQLPPQ). Residues 41-67 (NQKELNCRRLHLHEEPTLVKEPSPKQR) show a composition bias toward basic and acidic residues. Polar residues-rich tracts occupy residues 77–86 (VQRSTTTQPD) and 183–193 (SQLTHTMTTDS). A compositionally biased stretch (basic and acidic residues) spans 194 to 220 (THVEEIPRSPEKTSKVEKPEQRSSEEC). 2 coiled-coil regions span residues 236–352 (ELIR…SSHQ) and 498–546 (MCYQ…LRSH). The span at 351-367 (HQPLDSSHQPHWSTELT) shows a compositional bias: polar residues. The region spanning 745–870 (GARKVQSNES…AQNKSIKGDF (126 aa)) is the C2 domain. 2 disordered regions span residues 899–1057 (FQMS…VQDK) and 1088–1146 (AEDG…SDDI). Positions 908 to 999 (EGEEKEEEGG…DVLEASFTEE (92 aa)) form a coiled coil. Acidic residues predominate over residues 910–988 (EEKEEEGGEE…EEEEEEEDEN (79 aa)). 2 stretches are compositionally biased toward basic and acidic residues: residues 1022-1039 (PEKRKPPVIAEKKEREHQ) and 1088-1115 (AEDGGLKAQDKREEPPSPRSALRQEHPS). Positions 1129 to 1141 (CEQASEVSETQTT) are enriched in polar residues. The interaction with RPGR stretch occupies residues 1136–1326 (SETQTTDSDD…ALHGIYKEMT (191 aa)).

It belongs to the RPGRIP1 family. Interacts with NPHP4. Interacts with NEK4. Forms homodimers and elongated homopolymers. Interacts with RPGR. Interacts with SPATA7. Interacts with CEP290/NPHP6; mediating the association between RPGR and CEP290/NPHP6. As to expression, expressed in the retina (at protein level).

Its subcellular location is the cell projection. It localises to the cilium. May function as scaffolding protein. Required for normal location of RPGR at the connecting cilium of photoreceptor cells. Required for normal disk morphogenesis and disk organization in the outer segment of photoreceptor cells and for survival of photoreceptor cells. The sequence is that of X-linked retinitis pigmentosa GTPase regulator-interacting protein 1 (Rpgrip1) from Mus musculus (Mouse).